Here is a 136-residue protein sequence, read N- to C-terminus: Large ribosomal subunit protein bL17 (136 aa).

This sequence belongs to the bacterial ribosomal protein bL17 family. Part of the 50S ribosomal subunit. Contacts protein L32.

This Methylobacterium radiotolerans (strain ATCC 27329 / DSM 1819 / JCM 2831 / NBRC 15690 / NCIMB 10815 / 0-1) protein is Large ribosomal subunit protein bL17.